The chain runs to 132 residues: FPRL1 inhibitory protein (132 aa).

The N-terminal stretch at 1 to 28 (MKKNITKVIIASTVIATGLLTQTNDAKA) is a signal peptide.

It belongs to the CHIPS/FLIPr family.

The protein resides in the secreted. May be involved in countering the first line of host defense mechanisms. Impairs the leukocyte response to FPRL1 agonists by binding directly to host FPRL1. In Staphylococcus aureus (strain MW2), this protein is FPRL1 inhibitory protein (flr).